Consider the following 355-residue polypeptide: S-adenosylmethionine:tRNA ribosyltransferase-isomerase (355 aa).

Belongs to the QueA family. As to quaternary structure, monomer.

The protein resides in the cytoplasm. It carries out the reaction 7-aminomethyl-7-carbaguanosine(34) in tRNA + S-adenosyl-L-methionine = epoxyqueuosine(34) in tRNA + adenine + L-methionine + 2 H(+). Its pathway is tRNA modification; tRNA-queuosine biosynthesis. Functionally, transfers and isomerizes the ribose moiety from AdoMet to the 7-aminomethyl group of 7-deazaguanine (preQ1-tRNA) to give epoxyqueuosine (oQ-tRNA). The polypeptide is S-adenosylmethionine:tRNA ribosyltransferase-isomerase (Pectobacterium carotovorum subsp. carotovorum (strain PC1)).